Consider the following 499-residue polypeptide: Maturase K (499 aa).

The protein belongs to the intron maturase 2 family. MatK subfamily.

Its subcellular location is the plastid. The protein localises to the chloroplast. Functionally, usually encoded in the trnK tRNA gene intron. Probably assists in splicing its own and other chloroplast group II introns. The chain is Maturase K from Gleditsia triacanthos (Common honey-locust).